Here is a 327-residue protein sequence, read N- to C-terminus: Methionyl-tRNA formyltransferase (327 aa).

(6S)-5,6,7,8-tetrahydrofolate is bound at residue 122 to 125; that stretch reads SLLP.

This sequence belongs to the Fmt family.

It catalyses the reaction L-methionyl-tRNA(fMet) + (6R)-10-formyltetrahydrofolate = N-formyl-L-methionyl-tRNA(fMet) + (6S)-5,6,7,8-tetrahydrofolate + H(+). In terms of biological role, attaches a formyl group to the free amino group of methionyl-tRNA(fMet). The formyl group appears to play a dual role in the initiator identity of N-formylmethionyl-tRNA by promoting its recognition by IF2 and preventing the misappropriation of this tRNA by the elongation apparatus. The chain is Methionyl-tRNA formyltransferase from Ralstonia nicotianae (strain ATCC BAA-1114 / GMI1000) (Ralstonia solanacearum).